A 311-amino-acid chain; its full sequence is tRNA-cytidine(32) 2-sulfurtransferase (311 aa).

The PP-loop motif motif lies at 47–52; the sequence is SGGKDS. Residues cysteine 122, cysteine 125, and cysteine 213 each coordinate [4Fe-4S] cluster.

Belongs to the TtcA family. Homodimer. The cofactor is Mg(2+). It depends on [4Fe-4S] cluster as a cofactor.

The protein resides in the cytoplasm. It catalyses the reaction cytidine(32) in tRNA + S-sulfanyl-L-cysteinyl-[cysteine desulfurase] + AH2 + ATP = 2-thiocytidine(32) in tRNA + L-cysteinyl-[cysteine desulfurase] + A + AMP + diphosphate + H(+). It participates in tRNA modification. Functionally, catalyzes the ATP-dependent 2-thiolation of cytidine in position 32 of tRNA, to form 2-thiocytidine (s(2)C32). The sulfur atoms are provided by the cysteine/cysteine desulfurase (IscS) system. The sequence is that of tRNA-cytidine(32) 2-sulfurtransferase from Escherichia coli (strain 55989 / EAEC).